A 529-amino-acid polypeptide reads, in one-letter code: Delayed-rectifier potassium channel regulatory subunit KCNS1 (529 aa).

The Cytoplasmic portion of the chain corresponds to Met1 to Leu217. A helical transmembrane segment spans residues Pro218–Ile239. The Extracellular portion of the chain corresponds to His240–Pro270. A helical transmembrane segment spans residues Val271–Leu293. Topologically, residues Ala294–Pro304 are cytoplasmic. A helical membrane pass occupies residues Leu305 to Ala322. At Gly323–Leu340 the chain is on the extracellular side. A helical; Voltage-sensor membrane pass occupies residues Gly341–His361. The Cytoplasmic segment spans residues Ser362–Tyr376. The chain crosses the membrane as a helical span at residues Arg377–Tyr398. The Extracellular portion of the chain corresponds to Thr399–Ile411. The helical intramembrane region spans Pro412–Thr423. The Selectivity filter motif lies at Thr424 to Asp429. An intramembrane segment occupies Thr424–Val431. Residues Pro432–Lys438 lie on the Extracellular side of the membrane. Residues Leu439 to Tyr467 form a helical membrane-spanning segment. Residues Arg468–Tyr529 lie on the Cytoplasmic side of the membrane. Residues Gly494–Tyr529 form a disordered region. A compositionally biased stretch (basic and acidic residues) spans Thr502–Asp514.

Belongs to the potassium channel family. S (TC 1.A.1.2) subfamily. Kv9.1/KCNS1 sub-subfamily. In terms of assembly, heterotetramer with KCNB1. Heterotetramer with KCNB2. Does not form homomultimers.

Its subcellular location is the cell membrane. In terms of biological role, potassium channel regulatory subunit that modulate the delayed rectifier voltage-gated potassium channel activity of KCNB1 and KCNB2 by altering their kinetics, expression levels, and shifting the half-inactivation potential to more polarized values. While it does not form functional channels on its own, it can form functional heterotetrameric channels with KCNB1 and KCNB2. Each regulatory subunit has unique regulatory properties that can lead to extensive inhibition, significant changes in kinetics, and/or substantial shifts in the voltage dependencies of the inactivation process. The sequence is that of Delayed-rectifier potassium channel regulatory subunit KCNS1 from Macaca mulatta (Rhesus macaque).